The primary structure comprises 447 residues: N-succinylarginine dihydrolase (447 aa).

Substrate contacts are provided by residues 19 to 28, N110, and 137 to 138; these read AGLSFGNEAS and HR. E174 is an active-site residue. Position 212 (R212) interacts with substrate. H248 is an active-site residue. D250 and N359 together coordinate substrate. The Nucleophile role is filled by C365.

This sequence belongs to the succinylarginine dihydrolase family. In terms of assembly, homodimer.

It catalyses the reaction N(2)-succinyl-L-arginine + 2 H2O + 2 H(+) = N(2)-succinyl-L-ornithine + 2 NH4(+) + CO2. It participates in amino-acid degradation; L-arginine degradation via AST pathway; L-glutamate and succinate from L-arginine: step 2/5. In terms of biological role, catalyzes the hydrolysis of N(2)-succinylarginine into N(2)-succinylornithine, ammonia and CO(2). This chain is N-succinylarginine dihydrolase, found in Salmonella dublin (strain CT_02021853).